The following is a 308-amino-acid chain: tRNA dimethylallyltransferase (308 aa).

G10–T17 is an ATP binding site. T12 to T17 is a binding site for substrate. The interaction with substrate tRNA stretch occupies residues D35–Q38.

This sequence belongs to the IPP transferase family. Monomer. Requires Mg(2+) as cofactor.

The catalysed reaction is adenosine(37) in tRNA + dimethylallyl diphosphate = N(6)-dimethylallyladenosine(37) in tRNA + diphosphate. Functionally, catalyzes the transfer of a dimethylallyl group onto the adenine at position 37 in tRNAs that read codons beginning with uridine, leading to the formation of N6-(dimethylallyl)adenosine (i(6)A). The protein is tRNA dimethylallyltransferase of Fervidobacterium nodosum (strain ATCC 35602 / DSM 5306 / Rt17-B1).